Reading from the N-terminus, the 416-residue chain is NADH-quinone oxidoreductase subunit D (416 aa).

This sequence belongs to the complex I 49 kDa subunit family. NDH-1 is composed of 14 different subunits. Subunits NuoB, C, D, E, F, and G constitute the peripheral sector of the complex.

It is found in the cell inner membrane. It carries out the reaction a quinone + NADH + 5 H(+)(in) = a quinol + NAD(+) + 4 H(+)(out). NDH-1 shuttles electrons from NADH, via FMN and iron-sulfur (Fe-S) centers, to quinones in the respiratory chain. The immediate electron acceptor for the enzyme in this species is believed to be ubiquinone. Couples the redox reaction to proton translocation (for every two electrons transferred, four hydrogen ions are translocated across the cytoplasmic membrane), and thus conserves the redox energy in a proton gradient. The polypeptide is NADH-quinone oxidoreductase subunit D (Rhodopseudomonas palustris (strain BisB5)).